A 7913-amino-acid polypeptide reads, in one-letter code: Nonribosomal peptide synthetase dtxS1 (7913 aa).

Residues 263–662 (FEQRSRAHPN…GRNDNQVKIR (400 aa)) form an adenylation 1 region. The Carrier 1 domain occupies 789–865 (QPLSEVEKQV…NVAGQARRTT (77 aa)). Position 826 is an O-(pantetheine 4'-phosphoryl)serine (serine 826). Positions 903–1171 (QDAFPCTSLQ…ITTVPVRIRL (269 aa)) are condensation 1. Positions 1332–1740 (LETQAHSRPD…GRKDAQVKIR (409 aa)) are adenylation 2. A Carrier 2 domain is found at 1865 to 1941 (QPRTKLERQL…NLAQATGTQG (77 aa)). Serine 1902 is modified (O-(pantetheine 4'-phosphoryl)serine). The condensation 2 stretch occupies residues 1965 to 2249 (PAQLSPIQRL…FSTIFPVRVS (285 aa)). The interval 2863 to 3255 (LAQPHEPAIC…ARKDAQIKIR (393 aa)) is adenylation 3. Residues 3380–3456 (QPLSEAERKM…NVTHQAVAQL (77 aa)) form the Carrier 3 domain. An O-(pantetheine 4'-phosphoryl)serine modification is found at serine 3417. The segment at 3496–3761 (DAFPCTPLQE…FATLPLRVRL (266 aa)) is condensation 3. Residues 3924–4321 (DRVRIHPNAP…GRKDDQVKLR (398 aa)) are adenylation 4. Positions 4439-4450 (ELAQARTAQQGP) are enriched in polar residues. Residues 4439–4459 (ELAQARTAQQGPKRQPASEAE) form a disordered region. The Carrier 4 domain occupies 4453–4529 (QPASEAERQM…EAATQAQMLG (77 aa)). Serine 4490 is modified (O-(pantetheine 4'-phosphoryl)serine). The condensation 4 stretch occupies residues 4545 to 4837 (QSFAQARLWF…VNMQCLRVKI (293 aa)). The segment at 5006–5405 (FRQQVAACAD…RRMDAQVKIR (400 aa)) is adenylation 5. Residues 5933–6009 (QPTSKTQRQL…DMAEGLPLAK (77 aa)) enclose the Carrier 5 domain. Position 5970 is an O-(pantetheine 4'-phosphoryl)serine (serine 5970). The segment at 6023-6315 (VEQSFAQRRL…VNMQCIRIRV (293 aa)) is condensation 5. The tract at residues 6481–6766 (FRQQALLNPD…IINAYGPTEN (286 aa)) is adenylation 6. One can recognise a Carrier 6 domain in the interval 7394-7470 (QPTTDMEREM…DLACHLSPEE (77 aa)). Serine 7431 is subject to O-(pantetheine 4'-phosphoryl)serine. Residues 7501 to 7771 (EDVLPLTSFQ…CLNIVPIRVN (271 aa)) form a condensation 6 region.

It belongs to the NRP synthetase family.

Its pathway is secondary metabolite biosynthesis. Its function is as follows. Nonribosomal peptide synthetase; part of the gene cluster that mediates the biosynthesis of destruxins, insecticidal cyclic hexadepsipeptides which induce flaccid paralysis and visceral muscle contraction in insects through targeting the calcium channels and vacuolar-type ATPases. The aldo-keto reductase dtxS3 converts alpha-ketoisocaproic acid from deaminated leucine into alpha-hydroxyisocaproic acid (HIC), which is the first substrate for destruxin assembly by dtxS1. L-aspartate decarboxylase dtxS4 converts aspartic acid into beta-alanine, the last substrate for the destruxin assembly line performed by dtxS1. The nonribosomal peptide synthetase dtxS1 synthesizes destruxins B and B2, whereas the cytochrome P450 monooxygenase dtxS2 is required to convert destruxin B into other destruxin derivatives, including destructins C, D, A and E. Destruxin E-diol (ED) is further produced in a non-enzymatic manner from destruxin E. Destruxins play an important role in virulence and escape from insect host immune defenses. The chain is Nonribosomal peptide synthetase dtxS1 from Metarhizium robertsii (strain ARSEF 23 / ATCC MYA-3075) (Metarhizium anisopliae (strain ARSEF 23)).